We begin with the raw amino-acid sequence, 70 residues long: Conotoxin Ep11.12 (70 aa).

The first 26 residues, 1–26 (MMFRVTSVGCFLLVILSLNLVVLTNA), serve as a signal peptide directing secretion. 4 disulfides stabilise this stretch: cysteine 27–cysteine 41, cysteine 34–cysteine 46, cysteine 40–cysteine 50, and cysteine 45–cysteine 54. At proline 57 the chain carries Proline amide. A propeptide spanning residues 61–70 (AKLREFFRQR) is cleaved from the precursor.

Belongs to the conotoxin I2 superfamily. In terms of tissue distribution, expressed by the venom duct.

It localises to the secreted. This is Conotoxin Ep11.12 from Conus episcopatus (Bishop's cone).